Consider the following 410-residue polypeptide: Provicilin (410 aa).

Positions 1-15 are cleaved as a signal peptide; that stretch reads MLLAIAFLASVCVSS. Residues 23 to 181 form the Cupin type-1 1 domain; the sequence is FIFKSNRFQT…AFNTNYEEIE (159 aa). Disordered stretches follow at residues 223–242 and 312–331; these read SKNAKSSSKKSVSSESGPFN and QRNENQGKENDKEEEQEEET. Residues 225–238 are compositionally biased toward low complexity; sequence NAKSSSKKSVSSES. The Cupin type-1 2 domain maps to 241–409; it reads FNLRSRNPIY…AFPGSSHEVD (169 aa). An N-linked (GlcNAc...) asparagine glycan is attached at N359.

It belongs to the 7S seed storage protein family.

The protein resides in the vacuole. It is found in the aleurone grain. Its function is as follows. Seed storage protein. The chain is Provicilin from Pisum sativum (Garden pea).